A 1233-amino-acid polypeptide reads, in one-letter code: Structural maintenance of chromosomes protein 1A (1233 aa).

32 to 39 (GPNGSGKS) serves as a coordination point for ATP. 2 coiled-coil regions span residues 104–124 (EYKINNKVVQLHEYSEELEKL) and 163–503 (ELAQ…KAEI). The segment covering 284-293 (IKEKDSELNQ) has biased composition (basic and acidic residues). Disordered stretches follow at residues 284–308 (IKEKDSELNQKRPQYIKAKENTSHK) and 348–369 (QEFEERMEEESQSQGRDLTLEE). Residues Ser-358 and Ser-360 each carry the phosphoserine modification. The SMC hinge domain occupies 515-629 (VYGRLIDLCQ…DNVEDARRIA (115 aa)). An N6-acetyllysine mark is found at Lys-648 and Lys-713. The stretch at 660-935 (KAKARRWDEK…RHNLLQACKM (276 aa)) forms a coiled coil. Residues 947–968 (MDDISQEEGSSQGEDSVSGSQR) are disordered. The segment covering 953 to 967 (EEGSSQGEDSVSGSQ) has biased composition (low complexity). Ser-957, Ser-962, Ser-966, and Ser-970 each carry phosphoserine. Positions 991–1068 (KDAQAEEEIK…FEQIKKERFD (78 aa)) form a coiled coil. An N6-acetyllysine modification is found at Lys-1037.

It belongs to the SMC family. SMC1 subfamily. In terms of assembly, forms a heterodimer with SMC3 in cohesin complexes. Cohesin complexes are composed of the SMC1 (SMC1A or meiosis-specific SMC1B) and SMC3 heterodimer attached via their SMC hinge domain, RAD21 which link them, and one STAG protein (STAG1, STAG2 or meiosis-specific STAG3), which interacts with RAD21. In germ cell cohesin complexes, SMC1A is mutually exclusive with SMC1B. Found in a complex with CDCA5, SMC3 and RAD21, PDS5A/SCC-112 and PDS5B/APRIN. Interacts with NDC80, SYCP2, STAG3, BRCA1 and BRAT1. The cohesin complex interacts with the cohesin loading complex subunits NIPBL/Scc2 (via HEAT repeats) and MAU2/Scc4. NIPBL directly contacts all members of the complex, RAD21, SMC1A/B, SMC3 and STAG1. Interacts with RPGR. Found in a complex containing POLE and SMC3. In terms of processing, phosphorylated upon ionizing radiation or DNA methylation. Phosphorylation of Ser-957 and Ser-966 activates it and is required for S-phase checkpoint activation. Post-translationally, ubiquitinated by the DCX(DCAF15) complex, leading to its degradation.

Its subcellular location is the nucleus. It localises to the chromosome. It is found in the centromere. In terms of biological role, involved in chromosome cohesion during cell cycle and in DNA repair. Involved in DNA repair via its interaction with BRCA1 and its related phosphorylation by ATM, and works as a downstream effector in the ATM/NBS1 branch of S-phase checkpoint. Central component of cohesin complex. The cohesin complex is required for the cohesion of sister chromatids after DNA replication. The cohesin complex apparently forms a large proteinaceous ring within which sister chromatids can be trapped. At anaphase, the complex is cleaved and dissociates from chromatin, allowing sister chromatids to segregate. The cohesin complex may also play a role in spindle pole assembly during mitosis. Involved in DNA repair via its interaction with BRCA1 and its related phosphorylation by ATM, or via its phosphorylation by ATR. Works as a downstream effector both in the ATM/NBS1 branch and in the ATR/MSH2 branch of S-phase checkpoint. This is Structural maintenance of chromosomes protein 1A (SMC1A) from Bos taurus (Bovine).